Consider the following 432-residue polypeptide: Glutamate-1-semialdehyde 2,1-aminomutase 1 (432 aa).

Position 268 is an N6-(pyridoxal phosphate)lysine (K268).

This sequence belongs to the class-III pyridoxal-phosphate-dependent aminotransferase family. HemL subfamily. Homodimer. The cofactor is pyridoxal 5'-phosphate.

The protein localises to the cytoplasm. The enzyme catalyses (S)-4-amino-5-oxopentanoate = 5-aminolevulinate. The protein operates within porphyrin-containing compound metabolism; protoporphyrin-IX biosynthesis; 5-aminolevulinate from L-glutamyl-tRNA(Glu): step 2/2. This Bacillus cereus (strain ZK / E33L) protein is Glutamate-1-semialdehyde 2,1-aminomutase 1.